The following is a 308-amino-acid chain: Putative S-adenosyl-L-methionine-dependent methyltransferase Mmcs_1045 (308 aa).

S-adenosyl-L-methionine-binding positions include Asp133 and 162 to 163; that span reads DL.

It belongs to the UPF0677 family.

Functionally, exhibits S-adenosyl-L-methionine-dependent methyltransferase activity. This Mycobacterium sp. (strain MCS) protein is Putative S-adenosyl-L-methionine-dependent methyltransferase Mmcs_1045.